Here is a 309-residue protein sequence, read N- to C-terminus: Glutaminase (309 aa).

Residues Ser-65, Asn-117, Glu-162, Asn-169, Tyr-193, Tyr-245, and Val-263 each coordinate substrate.

Belongs to the glutaminase family. As to quaternary structure, homotetramer.

It catalyses the reaction L-glutamine + H2O = L-glutamate + NH4(+). This Geobacillus thermodenitrificans (strain NG80-2) protein is Glutaminase.